Here is a 207-residue protein sequence, read N- to C-terminus: Uridine kinase (207 aa).

11–18 (GGSGSGKT) serves as a coordination point for ATP.

It belongs to the uridine kinase family.

The protein resides in the cytoplasm. It catalyses the reaction uridine + ATP = UMP + ADP + H(+). It carries out the reaction cytidine + ATP = CMP + ADP + H(+). The protein operates within pyrimidine metabolism; CTP biosynthesis via salvage pathway; CTP from cytidine: step 1/3. It participates in pyrimidine metabolism; UMP biosynthesis via salvage pathway; UMP from uridine: step 1/1. This chain is Uridine kinase, found in Staphylococcus aureus (strain Mu3 / ATCC 700698).